We begin with the raw amino-acid sequence, 130 residues long: Small ribosomal subunit protein uS9 (130 aa).

Belongs to the universal ribosomal protein uS9 family.

The protein is Small ribosomal subunit protein uS9 of Shewanella loihica (strain ATCC BAA-1088 / PV-4).